Consider the following 613-residue polypeptide: Laccase 1 (613 aa).

The first 20 residues, 1 to 20, serve as a signal peptide directing secretion; the sequence is MSSSVRLLLIVALLYTNSWA. 3 consecutive Plastocyanin-like domains span residues 29–142, 171–359, and 468–598; these read ITWE…IRPK, YLVV…MRVP, and DATC…ILDG. An N-linked (GlcNAc...) asparagine glycan is attached at Asn74. Cu cation contacts are provided by His78, His80, His122, and His124. Asn256, Asn279, and Asn484 each carry an N-linked (GlcNAc...) asparagine glycan. 3 residues coordinate Cu cation: His506, His509, and His511. N-linked (GlcNAc...) asparagine glycosylation is present at Asn526. Residues His580, Cys581, His582, and His586 each contribute to the Cu cation site.

The protein belongs to the multicopper oxidase family. Cu cation is required as a cofactor.

It is found in the cell surface. Its pathway is pigment biosynthesis. Functionally, laccase; part of the Pks1 gene cluster that mediates the biosynthesis of an anthraquinone derivative pigment that contributes to conidial pigmentation that provides protection from UV radiation, heat and cold stress. The polyketide synthase Pks1 produces 1-acetyl-2,4,6,8-tetrahydroxy-9,10-anthraquinone though condensation of acetyl-CoA with malonyl-CoA. The dehydratase EthD and the laccase Mlac1 further convert the anthraquinone derivative into the final conidial pigment. This is Laccase 1 from Metarhizium acridum (strain CQMa 102).